A 476-amino-acid polypeptide reads, in one-letter code: Protein transport protein Sec61 subunit alpha isoform 2 (476 aa).

Residues 1–32 (MGIKFLEVIKPFCAVLPEIQKPERKIQFREKV) are Cytoplasmic-facing. A helical membrane pass occupies residues 33–53 (LWTAITLFIFLVCCQIPLFGI). At 54 to 75 (MSSDSADPFYWMRVILASNRGT) the chain is on the lumenal side. Residues 76–96 (LMELGISPIVTSGLIMQLLAG) form a helical membrane-spanning segment. Residues 97–117 (AKIIEVGDTPKDRALFNGAQK) lie on the Cytoplasmic side of the membrane. Residues 118 to 138 (LFGMIITIGQAIVYVMTGMYG) form a helical membrane-spanning segment. At 139 to 144 (DPAEMG) the chain is on the lumenal side. The chain crosses the membrane as a helical span at residues 145 to 165 (AGICLLIIIQLFVAGLIVLLL). Over 166-172 (DELLQKG) the chain is Cytoplasmic. A helical membrane pass occupies residues 173-193 (YGLGSGISLFIATNICETIVW). Residues 194–240 (KASSPTTINTGRGTEFEGAVIALFHLLATRTDKVRALREAFYRQNLP) are Lumenal-facing. The chain crosses the membrane as a helical span at residues 241 to 261 (NLMNLIATVFVFAVVIYFQGF). The Cytoplasmic segment spans residues 262–288 (RVDLPIKSARYRGQYSSYPIKLFYTSN). Residues 289–309 (IPIILQSALVSNLYVISQMLS) traverse the membrane as a helical segment. At 310–353 (VRFSGNFLVNLLGQWADVSGGGPARSYPVGGLCYYLSPPESMGA) the chain is on the lumenal side. Residues 354-374 (ILEDPVHVVVYIIFMLGSCAF) form a helical membrane-spanning segment. Topologically, residues 375–420 (FSKTWIEVSGSSAKDVAKQLKEQQMVMRGHRDTSMVHELNRYIPTA) are cytoplasmic. 2 helical membrane passes run 421–441 (AAFG…LGAI) and 442–462 (GSGT…EIFV). The Cytoplasmic portion of the chain corresponds to 463–476 (KEQAEVGGMGALFF).

The protein belongs to the SecY/SEC61-alpha family. In terms of assembly, the SEC61 channel-forming translocon complex consists of channel-forming core components SEC61A1, SEC61B and SEC61G and different auxiliary components such as SEC62 and SEC63.

The protein resides in the endoplasmic reticulum membrane. Its function is as follows. Component of SEC61 channel-forming translocon complex that mediates transport of signal peptide-containing precursor polypeptides across the endoplasmic reticulum (ER). Forms a ribosome receptor and a gated pore in the ER membrane, both functions required for cotranslational translocation of nascent polypeptides. The sequence is that of Protein transport protein Sec61 subunit alpha isoform 2 (SEC61A2) from Pongo abelii (Sumatran orangutan).